The sequence spans 219 residues: MFKPYNLEQGKFLVRLARRAVEEFIRSKRIIKPPEDTPSRLLEDNYGVFTTIETIREDGSTELRGCIGFPRGNVNTVKATINSALAAAFDDPRFAPLDVNELESVIFEVSVLSPLEEAKFNSPKELVNLVKVGVHGLVIERGMYSGLLLPQVPVEYCWDTVMFLDEACEKAYLRPECWAEKGTRVYTYEAQIFREKGPRGDVYERDLIEELKKCHLDEA.

The AMMECR1 domain maps to 8 to 204 (EQGKFLVRLA…EKGPRGDVYE (197 aa)).

In Caldivirga maquilingensis (strain ATCC 700844 / DSM 13496 / JCM 10307 / IC-167), this protein is Protein Cmaq_0360.